The following is a 189-amino-acid chain: GTP cyclohydrolase 1 (189 aa).

Zn(2+) is bound by residues C76, H79, and C149.

Belongs to the GTP cyclohydrolase I family. Toroid-shaped homodecamer, composed of two pentamers of five dimers.

The catalysed reaction is GTP + H2O = 7,8-dihydroneopterin 3'-triphosphate + formate + H(+). It functions in the pathway cofactor biosynthesis; 7,8-dihydroneopterin triphosphate biosynthesis; 7,8-dihydroneopterin triphosphate from GTP: step 1/1. The chain is GTP cyclohydrolase 1 from Dehalococcoides mccartyi (strain ATCC BAA-2266 / KCTC 15142 / 195) (Dehalococcoides ethenogenes (strain 195)).